The sequence spans 345 residues: Dimethyladenosine transferase 1, mitochondrial (345 aa).

The N-terminal 27 residues, 1–27 (MAAPGKLSTCRLPPLPTIREIIKLFRL), are a transit peptide targeting the mitochondrion. Positions 38, 63, 85, 86, 111, 112, and 141 each coordinate S-adenosyl-L-methionine.

The protein belongs to the class I-like SAM-binding methyltransferase superfamily. rRNA adenine N(6)-methyltransferase family. KsgA subfamily. Interacts with mitochondrial RNA polymerase POLRMT. Interacts with TFAM. Bound to the maturing mtSSU until the late stages of assembly.

The protein localises to the mitochondrion. It carries out the reaction adenosine(N)/adenosine(N+1) in rRNA + 4 S-adenosyl-L-methionine = N(6)-dimethyladenosine(N)/N(6)-dimethyladenosine(N+1) in rRNA + 4 S-adenosyl-L-homocysteine + 4 H(+). Its function is as follows. Mitochondrial methyltransferase which uses S-adenosyl methionine to dimethylate two highly conserved adjacent adenosine residues (A1583 and A1584) within the loop of helix 45 at the 3-prime end of 12S rRNA, thereby regulating the assembly or stability of the small subunit of the mitochondrial ribosome. Also required for basal transcription of mitochondrial DNA, probably via its interaction with POLRMT and TFAM. Stimulates transcription independently of the methyltransferase activity. This chain is Dimethyladenosine transferase 1, mitochondrial (TFB1M), found in Macaca fascicularis (Crab-eating macaque).